Consider the following 458-residue polypeptide: Argininosuccinate lyase (458 aa).

This sequence belongs to the lyase 1 family. Argininosuccinate lyase subfamily.

It localises to the cytoplasm. The catalysed reaction is 2-(N(omega)-L-arginino)succinate = fumarate + L-arginine. It functions in the pathway amino-acid biosynthesis; L-arginine biosynthesis; L-arginine from L-ornithine and carbamoyl phosphate: step 3/3. This is Argininosuccinate lyase from Salmonella choleraesuis (strain SC-B67).